The primary structure comprises 538 residues: DALR anticodon-binding domain-containing protein 3 (538 aa).

Part of a complex containing tRNA(Arg) and METTL2. Interacts with tRNA(Arg)(CCU) and tRNA(Arg)(UCU). Interacts with METTL2.

Its function is as follows. Involved in tRNA methylation. Facilitates the recognition and targeting of tRNA(Arg)(CCU) and tRNA(Arg)(UCU) substrates for N(3)-methylcytidine modification by METTL2. The sequence is that of DALR anticodon-binding domain-containing protein 3 (Dalrd3) from Mus musculus (Mouse).